A 772-amino-acid chain; its full sequence is Carnitine O-palmitoyltransferase 1, muscle isoform (772 aa).

The Cytoplasmic portion of the chain corresponds to 1–47 (MAEAHQAVAFQFTVTPDGVDFRLSREALRHIYLSGINSWKKRLIRIK). The chain crosses the membrane as a helical span at residues 48-73 (NGILRGVYPGSPTSWLVVVMATVGSN). Topologically, residues 74-102 (YCKVDISMGLVHCIQRCLPTRYGSYGTPQ) are mitochondrial intermembrane. The chain crosses the membrane as a helical span at residues 103-122 (TETLLSMVIFSTGVWATGIF). Over 123–772 (LFRQTLKLLL…DLFKISKTDS (650 aa)) the chain is Cytoplasmic. The active-site Proton acceptor is the H473. 555-567 (GKGLIKKCRTSPD) provides a ligand contact to CoA. The (R)-carnitine site is built by Y589 and T602.

It belongs to the carnitine/choline acetyltransferase family. In terms of tissue distribution, high expression in heart, skeletal muscle and brown adipose tissue. Also expressed in white adipose tissue, but not in liver.

It is found in the mitochondrion outer membrane. It catalyses the reaction (R)-carnitine + hexadecanoyl-CoA = O-hexadecanoyl-(R)-carnitine + CoA. The protein operates within lipid metabolism; fatty acid beta-oxidation. In terms of biological role, catalyzes the transfer of the acyl group of long-chain fatty acid-CoA conjugates onto carnitine, an essential step for the mitochondrial uptake of long-chain fatty acids and their subsequent beta-oxidation in the mitochondrion. This Rattus norvegicus (Rat) protein is Carnitine O-palmitoyltransferase 1, muscle isoform (Cpt1b).